The chain runs to 414 residues: Dihydroorotase (414 aa).

The Zn(2+) site is built by H56 and H58. Substrate-binding positions include 58–60 (HFR) and N90. K138, H171, H219, and D280 together coordinate Zn(2+). K138 carries the N6-carboxylysine modification. D280 is an active-site residue. H284 is a substrate binding site.

This sequence belongs to the metallo-dependent hydrolases superfamily. DHOase family. Class I DHOase subfamily. Zn(2+) serves as cofactor.

The catalysed reaction is (S)-dihydroorotate + H2O = N-carbamoyl-L-aspartate + H(+). Its pathway is pyrimidine metabolism; UMP biosynthesis via de novo pathway; (S)-dihydroorotate from bicarbonate: step 3/3. Functionally, catalyzes the reversible cyclization of carbamoyl aspartate to dihydroorotate. The protein is Dihydroorotase of Thermoplasma acidophilum (strain ATCC 25905 / DSM 1728 / JCM 9062 / NBRC 15155 / AMRC-C165).